The sequence spans 135 residues: Retinol-binding protein 1 (135 aa).

The tract at residues 22–32 is important for interaction with STRA6; sequence RALDVNVALRK. All-trans-retinol contacts are provided by lysine 41, methionine 63, and glutamine 109.

Belongs to the calycin superfamily. Fatty-acid binding protein (FABP) family. Interacts (only as retinol-free apoprotein) with STRA6.

It localises to the cytoplasm. It is found in the lipid droplet. Its function is as follows. Cytoplasmic retinol-binding protein. Accepts retinol from the transport protein STRA6, and thereby contributes to retinol uptake, storage and retinoid homeostasis. This is Retinol-binding protein 1 (Rbp1) from Rattus norvegicus (Rat).